The chain runs to 447 residues: N-succinylarginine dihydrolase (447 aa).

Substrate is bound by residues 19–28 (AGLSFGNEAS), asparagine 110, and 137–138 (HR). Residue glutamate 174 is part of the active site. Residue arginine 212 participates in substrate binding. Histidine 248 is an active-site residue. Residues aspartate 250 and asparagine 359 each contribute to the substrate site. Cysteine 365 acts as the Nucleophile in catalysis.

Belongs to the succinylarginine dihydrolase family. In terms of assembly, homodimer.

The catalysed reaction is N(2)-succinyl-L-arginine + 2 H2O + 2 H(+) = N(2)-succinyl-L-ornithine + 2 NH4(+) + CO2. The protein operates within amino-acid degradation; L-arginine degradation via AST pathway; L-glutamate and succinate from L-arginine: step 2/5. In terms of biological role, catalyzes the hydrolysis of N(2)-succinylarginine into N(2)-succinylornithine, ammonia and CO(2). The protein is N-succinylarginine dihydrolase of Citrobacter koseri (strain ATCC BAA-895 / CDC 4225-83 / SGSC4696).